The chain runs to 98 residues: NADH-ubiquinone oxidoreductase chain 4L (98 aa).

Helical transmembrane passes span 2-22, 29-49, and 61-81; these read PSIF…TLVF, SLLC…LIIL, and ILLL…LVMV.

It belongs to the complex I subunit 4L family. Core subunit of respiratory chain NADH dehydrogenase (Complex I) which is composed of 45 different subunits.

The protein localises to the mitochondrion inner membrane. It catalyses the reaction a ubiquinone + NADH + 5 H(+)(in) = a ubiquinol + NAD(+) + 4 H(+)(out). In terms of biological role, core subunit of the mitochondrial membrane respiratory chain NADH dehydrogenase (Complex I) which catalyzes electron transfer from NADH through the respiratory chain, using ubiquinone as an electron acceptor. Part of the enzyme membrane arm which is embedded in the lipid bilayer and involved in proton translocation. This Avahi laniger (Eastern woolly lemur) protein is NADH-ubiquinone oxidoreductase chain 4L (MT-ND4L).